A 94-amino-acid chain; its full sequence is MKFVSLASLGFALVAALGAVATPVEADSLTAGGLDARDESAVLATYNGKCYKKDNICKYKAQSGKTAICKCYVKKCPRDGAKCEFDSYKGKCYC.

The first 21 residues, 1 to 21 (MKFVSLASLGFALVAALGAVA), serve as a signal peptide directing secretion. The propeptide occupies 22 to 43 (TPVEADSLTAGGLDARDESAVL). Cystine bridges form between C50–C76, C57–C83, C69–C71, and C92–C94.

It belongs to the antifungal protein pafB family.

Its subcellular location is the secreted. The protein localises to the host cytoplasm. Antifungal protein that acts as an inhibitor of growth of a variety of fungal species. In Aspergillus giganteus, this protein is Antifungal protein (afp).